The following is a 379-amino-acid chain: Transcription factor TIP2 (379 aa).

The disordered stretch occupies residues 144–184 (MVGPFESSPTPRSGGGRKRSRATAGFHGGGPANGVEKKEKQ). Residues 173–186 (GPANGVEKKEKQRR) are basic motif; degenerate. Residues 173–222 (GPANGVEKKEKQRRLRLTEKYNALMLLIPNRTKEDRATVISDAIEYIQEL) form the bHLH domain. Residues 187-222 (LRLTEKYNALMLLIPNRTKEDRATVISDAIEYIQEL) form a helix-loop-helix motif region.

This sequence belongs to the bHLH protein family. In terms of assembly, homodimer. Interacts with TDR, but not with EAT1. As to expression, highly expressed in anthers; strong expression in the middle layer and tapetum, and weak expression in the endothecium.

The protein localises to the nucleus. In terms of biological role, transcription factor that binds to the E-box-containing promoter regions of the transcription factors TDR and EAT1, activating their expression. May have a role in specifying the cell pattern of the inner anther walls and functioning in meiosis progression. Required for male reproduction. Acts downstream of UDT1 and GAMYB, but upstream of TDR1 and EAT1 in pollen development. The sequence is that of Transcription factor TIP2 (TIP2) from Oryza sativa subsp. japonica (Rice).